We begin with the raw amino-acid sequence, 644 residues long: Interleukin-23 receptor (644 aa).

The N-terminal stretch at 1–23 (MSHLTLQLHVVIALYVLFRWCHG) is a signal peptide. Over 24 to 374 (GITSINCSGD…PASGNHQDIG (351 aa)) the chain is Extracellular. Residues Asn47, Asn130, and Asn232 are each glycosylated (N-linked (GlcNAc...) asparagine). Fibronectin type-III domains lie at 127 to 217 (APSN…LDDI) and 219 to 318 (IPSA…TSQE). A helical membrane pass occupies residues 375 to 395 (LLSGMVFLAIMLPIFSLIGIF). The Cytoplasmic segment spans residues 396–644 (NRSLRIGIKR…HFSRISLFQK (249 aa)).

It belongs to the type I cytokine receptor family. Type 2 subfamily. In terms of assembly, heterodimer with IL12RB1. In presence of IL23, the heterodimer forms the IL23 receptor. Interacts with JAK2 and in presence of IL23 with STAT3. Post-translationally, phosphorylated in response to IL23. Expressed by Th1, Th2 and dendritic cells.

It is found in the cell membrane. In terms of biological role, associates with IL12RB1 to form the interleukin-23 receptor. Binds IL23 and mediates T-cells, NK cells and possibly certain macrophage/myeloid cells stimulation probably through activation of the Jak-Stat signaling cascade. IL23 functions in innate and adaptive immunity and may participate in acute response to infection in peripheral tissues. IL23 may be responsible for autoimmune inflammatory diseases and be important for tumorigenesis. The protein is Interleukin-23 receptor (Il23r) of Mus musculus (Mouse).